Here is a 476-residue protein sequence, read N- to C-terminus: Ribulose bisphosphate carboxylase large chain (476 aa).

Residues N124 and T174 each coordinate substrate. K176 serves as the catalytic Proton acceptor. Substrate is bound at residue K178. Residues K202, D204, and E205 each contribute to the Mg(2+) site. An N6-carboxylysine modification is found at K202. Residue H295 is the Proton acceptor of the active site. Substrate contacts are provided by R296, H328, and S380.

The protein belongs to the RuBisCO large chain family. Type I subfamily. As to quaternary structure, heterohexadecamer of 8 large chains and 8 small chains; disulfide-linked. The disulfide link is formed within the large subunit homodimers. Requires Mg(2+) as cofactor. Post-translationally, the disulfide bond which can form in the large chain dimeric partners within the hexadecamer appears to be associated with oxidative stress and protein turnover.

The protein resides in the carboxysome. It catalyses the reaction 2 (2R)-3-phosphoglycerate + 2 H(+) = D-ribulose 1,5-bisphosphate + CO2 + H2O. The enzyme catalyses D-ribulose 1,5-bisphosphate + O2 = 2-phosphoglycolate + (2R)-3-phosphoglycerate + 2 H(+). In terms of biological role, ruBisCO catalyzes two reactions: the carboxylation of D-ribulose 1,5-bisphosphate, the primary event in carbon dioxide fixation, as well as the oxidative fragmentation of the pentose substrate in the photorespiration process. Both reactions occur simultaneously and in competition at the same active site. This Trichormus variabilis (strain ATCC 29413 / PCC 7937) (Anabaena variabilis) protein is Ribulose bisphosphate carboxylase large chain.